We begin with the raw amino-acid sequence, 102 residues long: ATP-dependent Clp protease adapter protein ClpS (102 aa).

This sequence belongs to the ClpS family. In terms of assembly, binds to the N-terminal domain of the chaperone ClpA.

Functionally, involved in the modulation of the specificity of the ClpAP-mediated ATP-dependent protein degradation. This is ATP-dependent Clp protease adapter protein ClpS from Shewanella loihica (strain ATCC BAA-1088 / PV-4).